Here is a 221-residue protein sequence, read N- to C-terminus: Iron-sulfur cluster repair protein YtfE (221 aa).

Belongs to the RIC family. YtfE subfamily. As to quaternary structure, homodimer.

It is found in the cytoplasm. Functionally, di-iron-containing protein involved in the repair of iron-sulfur clusters damaged by oxidative and nitrosative stress conditions. The protein is Iron-sulfur cluster repair protein YtfE of Dickeya chrysanthemi (strain Ech1591) (Dickeya zeae (strain Ech1591)).